Consider the following 258-residue polypeptide: Tryptophan synthase alpha chain (258 aa).

Residues glutamate 46 and aspartate 57 each act as proton acceptor in the active site.

This sequence belongs to the TrpA family. Tetramer of two alpha and two beta chains.

It carries out the reaction (1S,2R)-1-C-(indol-3-yl)glycerol 3-phosphate + L-serine = D-glyceraldehyde 3-phosphate + L-tryptophan + H2O. It participates in amino-acid biosynthesis; L-tryptophan biosynthesis; L-tryptophan from chorismate: step 5/5. The alpha subunit is responsible for the aldol cleavage of indoleglycerol phosphate to indole and glyceraldehyde 3-phosphate. The protein is Tryptophan synthase alpha chain of Phocaeicola vulgatus (strain ATCC 8482 / DSM 1447 / JCM 5826 / CCUG 4940 / NBRC 14291 / NCTC 11154) (Bacteroides vulgatus).